We begin with the raw amino-acid sequence, 522 residues long: Cytochrome P450 4e5, mitochondrial (522 aa).

Heme is bound by residues E307 and C443.

The protein belongs to the cytochrome P450 family. The cofactor is heme.

It localises to the mitochondrion. Its function is as follows. Probably involved in steroid hormones biosynthesis. The polypeptide is Cytochrome P450 4e5, mitochondrial (Cyp4e5) (Drosophila mettleri (Fruit fly)).